The following is a 194-amino-acid chain: Large ribosomal subunit protein bL9 (194 aa).

Belongs to the bacterial ribosomal protein bL9 family.

Binds to the 23S rRNA. The polypeptide is Large ribosomal subunit protein bL9 (Rhodopseudomonas palustris (strain BisA53)).